The primary structure comprises 585 residues: Isocitrate dehydrogenase kinase/phosphatase (585 aa).

Residues alanine 315 to methionine 321 and lysine 336 each bind ATP. The active site involves aspartate 371.

This sequence belongs to the AceK family.

The protein localises to the cytoplasm. The enzyme catalyses L-seryl-[isocitrate dehydrogenase] + ATP = O-phospho-L-seryl-[isocitrate dehydrogenase] + ADP + H(+). Its function is as follows. Bifunctional enzyme which can phosphorylate or dephosphorylate isocitrate dehydrogenase (IDH) on a specific serine residue. This is a regulatory mechanism which enables bacteria to bypass the Krebs cycle via the glyoxylate shunt in response to the source of carbon. When bacteria are grown on glucose, IDH is fully active and unphosphorylated, but when grown on acetate or ethanol, the activity of IDH declines drastically concomitant with its phosphorylation. The sequence is that of Isocitrate dehydrogenase kinase/phosphatase from Photorhabdus laumondii subsp. laumondii (strain DSM 15139 / CIP 105565 / TT01) (Photorhabdus luminescens subsp. laumondii).